Here is a 92-residue protein sequence, read N- to C-terminus: LYR motif-containing protein 4A (92 aa).

The protein belongs to the complex I LYR family.

The protein is LYR motif-containing protein 4A (lyrm4a) of Salmo salar (Atlantic salmon).